A 163-amino-acid chain; its full sequence is uncharacterized protein (163 aa).

The next 2 membrane-spanning stretches (helical) occupy residues tyrosine 7–valine 27 and leucine 51–phenylalanine 71.

Its subcellular location is the cell membrane. This is an uncharacterized protein from Rickettsia prowazekii (strain Madrid E).